A 261-amino-acid chain; its full sequence is Protein phosphatase inhibitor 2 (261 aa).

Positions 1–16 (MNKDEEFLEEHHYKDD) are enriched in basic and acidic residues. A required for binding to pppB region spans residues 1–150 (MNKDEEFLEE…TPYHYYESEE (150 aa)). The tract at residues 1–261 (MNKDEEFLEE…LNANLSDDEQ (261 aa)) is disordered. The segment covering 17 to 60 (DAIEGEEEQGEEEESDLDDDMYNIDGETNDDDDDDEAEDEESSE) has biased composition (acidic residues). The segment covering 123–134 (LTINDMNKSSTM) has biased composition (polar residues). Residues 150-242 (EETDESKKYL…KKFDNLRKAH (93 aa)) are a coiled coil. The segment covering 154-163 (ESKKYLENKF) has biased composition (basic and acidic residues). Basic residues predominate over residues 195-206 (DKKKKKKNLKIH). Positions 212 to 225 (DDNDDNEDEDEDET) are enriched in acidic residues. Positions 226–250 (EEKKENKKKFDNLRKAHYNEFKVVR) are enriched in basic and acidic residues.

Belongs to the protein phosphatase inhibitor 2 family. In terms of assembly, interacts with pppB.

Its function is as follows. Inhibitor of protein-phosphatase 1 (PP1). The sequence is that of Protein phosphatase inhibitor 2 (dpiA) from Dictyostelium discoideum (Social amoeba).